Here is a 282-residue protein sequence, read N- to C-terminus: Bifunctional protein FolD (282 aa).

NADP(+) contacts are provided by residues Gly164–Ser166 and Ser189.

Belongs to the tetrahydrofolate dehydrogenase/cyclohydrolase family. Homodimer.

It carries out the reaction (6R)-5,10-methylene-5,6,7,8-tetrahydrofolate + NADP(+) = (6R)-5,10-methenyltetrahydrofolate + NADPH. The catalysed reaction is (6R)-5,10-methenyltetrahydrofolate + H2O = (6R)-10-formyltetrahydrofolate + H(+). It functions in the pathway one-carbon metabolism; tetrahydrofolate interconversion. Functionally, catalyzes the oxidation of 5,10-methylenetetrahydrofolate to 5,10-methenyltetrahydrofolate and then the hydrolysis of 5,10-methenyltetrahydrofolate to 10-formyltetrahydrofolate. The sequence is that of Bifunctional protein FolD from Streptococcus suis (strain 05ZYH33).